The following is a 213-amino-acid chain: Pyridoxine/pyridoxamine 5'-phosphate oxidase (213 aa).

Substrate contacts are provided by residues 8–11 and Lys66; that span reads RREY. FMN is bound by residues 61-66, 76-77, Arg82, Lys83, and Gln105; these read RIVLLK and YT. Substrate is bound by residues Tyr123, Arg127, and Ser131. FMN contacts are provided by residues 140–141 and Trp185; that span reads QS. 191 to 193 lines the substrate pocket; the sequence is RLH. Arg195 lines the FMN pocket.

Belongs to the pyridoxamine 5'-phosphate oxidase family. As to quaternary structure, homodimer. Requires FMN as cofactor.

It carries out the reaction pyridoxamine 5'-phosphate + O2 + H2O = pyridoxal 5'-phosphate + H2O2 + NH4(+). The catalysed reaction is pyridoxine 5'-phosphate + O2 = pyridoxal 5'-phosphate + H2O2. The protein operates within cofactor metabolism; pyridoxal 5'-phosphate salvage; pyridoxal 5'-phosphate from pyridoxamine 5'-phosphate: step 1/1. Its pathway is cofactor metabolism; pyridoxal 5'-phosphate salvage; pyridoxal 5'-phosphate from pyridoxine 5'-phosphate: step 1/1. Catalyzes the oxidation of either pyridoxine 5'-phosphate (PNP) or pyridoxamine 5'-phosphate (PMP) into pyridoxal 5'-phosphate (PLP). In Pseudoalteromonas atlantica (strain T6c / ATCC BAA-1087), this protein is Pyridoxine/pyridoxamine 5'-phosphate oxidase.